The sequence spans 492 residues: N-succinylglutamate 5-semialdehyde dehydrogenase (492 aa).

Residue 220–225 (GSANTG) participates in NAD(+) binding. Active-site residues include Glu243 and Cys277.

This sequence belongs to the aldehyde dehydrogenase family. AstD subfamily.

It carries out the reaction N-succinyl-L-glutamate 5-semialdehyde + NAD(+) + H2O = N-succinyl-L-glutamate + NADH + 2 H(+). It functions in the pathway amino-acid degradation; L-arginine degradation via AST pathway; L-glutamate and succinate from L-arginine: step 4/5. Its function is as follows. Catalyzes the NAD-dependent reduction of succinylglutamate semialdehyde into succinylglutamate. The chain is N-succinylglutamate 5-semialdehyde dehydrogenase from Escherichia coli O127:H6 (strain E2348/69 / EPEC).